Consider the following 260-residue polypeptide: Adenosylcobinamide-GDP ribazoletransferase (260 aa).

6 helical membrane-spanning segments follow: residues 40–60, 64–84, 117–137, 142–162, 188–208, and 210–230; these read AFPF…LLLL, TDPL…TGAL, YGAI…AAII, PLAA…AIAW, HFAL…PFGL, and PLVA…VFIR.

Belongs to the CobS family. It depends on Mg(2+) as a cofactor.

It localises to the cell inner membrane. The catalysed reaction is alpha-ribazole + adenosylcob(III)inamide-GDP = adenosylcob(III)alamin + GMP + H(+). It catalyses the reaction alpha-ribazole 5'-phosphate + adenosylcob(III)inamide-GDP = adenosylcob(III)alamin 5'-phosphate + GMP + H(+). The protein operates within cofactor biosynthesis; adenosylcobalamin biosynthesis; adenosylcobalamin from cob(II)yrinate a,c-diamide: step 7/7. In terms of biological role, joins adenosylcobinamide-GDP and alpha-ribazole to generate adenosylcobalamin (Ado-cobalamin). Also synthesizes adenosylcobalamin 5'-phosphate from adenosylcobinamide-GDP and alpha-ribazole 5'-phosphate. This is Adenosylcobinamide-GDP ribazoletransferase from Rhizobium etli (strain ATCC 51251 / DSM 11541 / JCM 21823 / NBRC 15573 / CFN 42).